A 359-amino-acid polypeptide reads, in one-letter code: uncharacterized protein (359 aa).

This is an uncharacterized protein from Archaeoglobus fulgidus (strain ATCC 49558 / DSM 4304 / JCM 9628 / NBRC 100126 / VC-16).